Here is a 1136-residue protein sequence, read N- to C-terminus: Mitochondrial 3' processome subunit 3 (1136 aa).

The transit peptide at 1–97 directs the protein to the mitochondrion; that stretch reads MKKAWAQLER…RGLVCTTVGD (97 aa).

Component of the mitochondrial 3' processome (MPsome) complex composed at least of terminal uridylyltransferase KRET1/TUT1, 3'-5' exonuclease DSS1, MPSS1, MPSS2 and MPSS3. Within the complex, interacts with KRET1.

Its subcellular location is the mitochondrion. Functionally, as part of the mitochondrial 3' processome (MPsome), involved in the maturation of guided RNA (gRNA) precursors. The sequence is that of Mitochondrial 3' processome subunit 3 from Trypanosoma brucei brucei.